The following is a 649-amino-acid chain: MHVTLPDGKQLDLQAGATALDVARALGPRLAQDALAALVNGELMDLMTPLPEGAQVRLITKKNPGDAAPVFRHSLGHVLSQAVGEFYQRKGYPREAVKRGVGPAIENGFYQDFDLPEPLKEEDLPEIEAIMREIIGRGLDIVRQDVGKAAALKHFSYDPYKVELIQELPENEPVTFYAQGDYVDLCRGPHFPNTGKLPGAFKLMSTSGAYWRGNEKNPILQRVYGVAFATQKELDEYLERLEEARRRDHRKLGRELELFLIDPLVGKGLPMWLPNGTVLREELTRFLREQQFQRDYQGVVTPNIGNLDLFRTSGHYPYYSDSQFEPLSVDEEQYMLKPMNCPFHIRIYASKPRSYRDLPVRLAEFGTVYRYEMSGELNGLTRVRGFTQDDAHIFARPDQLKKEFLDVLDLTVLVLKTFGMNDVRFRVGVRDPASDKYVGDPAQWEVAERQIIEAVEEVGLPYTVEPGDAAFYGPKLDFVVKDVLGREWQLGTIQVDYNLPERFDLTYTGEDGQEHRPVMIHRAPFGSLERFVGILIEHYGGDFPFWLAPRQIMLIPIADRHNAYAQTLANEFKAAGLRAEVDDSNNRMNAKVRNAELHKIPVMLIVGDQEEARREVSVRERTPEGHKERKGVDFTALLAELQERYRTRA.

In terms of domain architecture, TGS spans 1–60; it reads MHVTLPDGKQLDLQAGATALDVARALGPRLAQDALAALVNGELMDLMTPLPEGAQVRLIT. The interval 248-544 is catalytic; it reads DHRKLGRELE…LIEHYGGDFP (297 aa). Positions 341, 392, and 521 each coordinate Zn(2+).

Belongs to the class-II aminoacyl-tRNA synthetase family. As to quaternary structure, homodimer. The cofactor is Zn(2+).

The protein localises to the cytoplasm. The catalysed reaction is tRNA(Thr) + L-threonine + ATP = L-threonyl-tRNA(Thr) + AMP + diphosphate + H(+). In terms of biological role, catalyzes the attachment of threonine to tRNA(Thr) in a two-step reaction: L-threonine is first activated by ATP to form Thr-AMP and then transferred to the acceptor end of tRNA(Thr). Also edits incorrectly charged L-seryl-tRNA(Thr). The chain is Threonine--tRNA ligase from Deinococcus geothermalis (strain DSM 11300 / CIP 105573 / AG-3a).